A 288-amino-acid polypeptide reads, in one-letter code: MKIPEEEFLAPGHRGCAGCGATVGVRLALKVLGKNTVAVSSTGCLEVITTPYPETAWEIPWIHVAFENAAAVASGVERALRARGRGEVNVVAFAGDGGTADIGLQSLSGAMERGHNIIYICYDNEAYMNTGIQRSASTPYGASTTTSPHGKESFGEDRPKKNMPLIMAAHGVPYVATASISYPEDFMEKVRKARDIEGPAYIHLHQPCTTGWGFDPSKTVELGRLAVETGSWILYEIEDGDFRVTYRPVQRKPVEEYLNAQKRFRHLTEEQKAKIQEYVDSVCQELRI.

[4Fe-4S] cluster-binding residues include Cys-16, Cys-19, and Cys-44. Over residues 137–148 the composition is skewed to polar residues; that stretch reads STPYGASTTTSP. The disordered stretch occupies residues 137-159; sequence STPYGASTTTSPHGKESFGEDRP. Residues 149-159 are compositionally biased toward basic and acidic residues; that stretch reads HGKESFGEDRP. Position 208 (Cys-208) interacts with [4Fe-4S] cluster.

As to quaternary structure, heterotetramer of one alpha, one beta, one delta and one gamma chain. The cofactor is [4Fe-4S] cluster.

The catalysed reaction is 2 oxidized [2Fe-2S]-[ferredoxin] + pyruvate + CoA = 2 reduced [2Fe-2S]-[ferredoxin] + acetyl-CoA + CO2 + H(+). The chain is Pyruvate synthase subunit PorB (porB) from Methanothermobacter marburgensis (strain ATCC BAA-927 / DSM 2133 / JCM 14651 / NBRC 100331 / OCM 82 / Marburg) (Methanobacterium thermoautotrophicum).